A 193-amino-acid chain; its full sequence is Fra a 1-associated protein (193 aa).

A disordered region spans residues 1 to 27; the sequence is MGWVWKDDDEQGGHVNPSAADISPRLD.

Interacts with FRAA1E, FRAA2 and FRAA3.

The sequence is that of Fra a 1-associated protein from Fragaria ananassa (Strawberry).